Here is a 355-residue protein sequence, read N- to C-terminus: Homeotic protein knotted-1 (355 aa).

The interval 205 to 233 (KCEGVGSSEEDQDNSGGETELPEIDPRAE) is disordered. The ELK domain maps to 236-256 (ELKNHLLRKYSGYLSSLKQEL). Positions 257–320 (SKKKKKGKLP…NQRKRHWKPS (64 aa)) form a DNA-binding region, homeobox; TALE-type.

This sequence belongs to the TALE/KNOX homeobox family. In terms of tissue distribution, expressed in the apical meristems, in the newly emerged lateral primordia in the floral bud, in their vascular bundles and in the cortex parenchyma of the floral pedicle. Also present in the lateral tips of leaf primordia.

The protein resides in the nucleus. In terms of biological role, appears to be involved in meristem formation and in the regulation of leaf morphology. Misexpression makes the leaf more compound which is always associated with growth retardation and loss of apical dominance, resulting in dwarfed, bushy plants. Probably binds to the DNA sequence 5'-TGAC-3'. This Solanum lycopersicum (Tomato) protein is Homeotic protein knotted-1 (KN1).